We begin with the raw amino-acid sequence, 536 residues long: Proto-oncogene tyrosine-protein kinase Yrk (536 aa).

Glycine 2 carries the N-myristoyl glycine lipid modification. 2 S-palmitoyl cysteine lipidation sites follow: cysteine 3 and cysteine 6. The tract at residues 10–36 (ISGKGQGGSGTGTPAHPPSQYDPDPTQ) is disordered. The SH3 domain maps to 81 to 142 (GGVTLFIALY…PSNYVAPVDS (62 aa)). The 98-residue stretch at 148–245 (WYFGKIGRKD…GLCCRLAVPC (98 aa)) folds into the SH2 domain. The Protein kinase domain maps to 270-523 (LQLLQKLGNG…YLQSFLEDYF (254 aa)). ATP is bound by residues 276 to 284 (LGNGQFGEV) and lysine 298. Aspartate 389 acts as the Proton acceptor in catalysis. Tyrosine 419 is modified (phosphotyrosine; by autocatalysis). The residue at position 530 (tyrosine 530) is a Phosphotyrosine.

It belongs to the protein kinase superfamily. Tyr protein kinase family. SRC subfamily. Phosphorylated. In terms of tissue distribution, there are elevated levels of this protein in neural and hematopoietic tissues.

It carries out the reaction L-tyrosyl-[protein] + ATP = O-phospho-L-tyrosyl-[protein] + ADP + H(+). Its function is as follows. May participate in signaling pathways. The polypeptide is Proto-oncogene tyrosine-protein kinase Yrk (YRK) (Gallus gallus (Chicken)).